Reading from the N-terminus, the 201-residue chain is 3-isopropylmalate dehydratase small subunit (201 aa).

The protein belongs to the LeuD family. LeuD type 1 subfamily. As to quaternary structure, heterodimer of LeuC and LeuD.

The enzyme catalyses (2R,3S)-3-isopropylmalate = (2S)-2-isopropylmalate. Its pathway is amino-acid biosynthesis; L-leucine biosynthesis; L-leucine from 3-methyl-2-oxobutanoate: step 2/4. Catalyzes the isomerization between 2-isopropylmalate and 3-isopropylmalate, via the formation of 2-isopropylmaleate. In Escherichia fergusonii (strain ATCC 35469 / DSM 13698 / CCUG 18766 / IAM 14443 / JCM 21226 / LMG 7866 / NBRC 102419 / NCTC 12128 / CDC 0568-73), this protein is 3-isopropylmalate dehydratase small subunit.